The chain runs to 218 residues: Thiamine-phosphate synthase (218 aa).

Residues 43–47 (QFRDK) and Asn-78 contribute to the 4-amino-2-methyl-5-(diphosphooxymethyl)pyrimidine site. Positions 79 and 98 each coordinate Mg(2+). Ser-117 serves as a coordination point for 4-amino-2-methyl-5-(diphosphooxymethyl)pyrimidine. 143–145 (TNS) is a binding site for 2-[(2R,5Z)-2-carboxy-4-methylthiazol-5(2H)-ylidene]ethyl phosphate. Lys-146 is a binding site for 4-amino-2-methyl-5-(diphosphooxymethyl)pyrimidine. 2-[(2R,5Z)-2-carboxy-4-methylthiazol-5(2H)-ylidene]ethyl phosphate is bound by residues Gly-174 and 194–195 (IS).

The protein belongs to the thiamine-phosphate synthase family. Mg(2+) is required as a cofactor.

It carries out the reaction 2-[(2R,5Z)-2-carboxy-4-methylthiazol-5(2H)-ylidene]ethyl phosphate + 4-amino-2-methyl-5-(diphosphooxymethyl)pyrimidine + 2 H(+) = thiamine phosphate + CO2 + diphosphate. The catalysed reaction is 2-(2-carboxy-4-methylthiazol-5-yl)ethyl phosphate + 4-amino-2-methyl-5-(diphosphooxymethyl)pyrimidine + 2 H(+) = thiamine phosphate + CO2 + diphosphate. The enzyme catalyses 4-methyl-5-(2-phosphooxyethyl)-thiazole + 4-amino-2-methyl-5-(diphosphooxymethyl)pyrimidine + H(+) = thiamine phosphate + diphosphate. The protein operates within cofactor biosynthesis; thiamine diphosphate biosynthesis; thiamine phosphate from 4-amino-2-methyl-5-diphosphomethylpyrimidine and 4-methyl-5-(2-phosphoethyl)-thiazole: step 1/1. Functionally, condenses 4-methyl-5-(beta-hydroxyethyl)thiazole monophosphate (THZ-P) and 2-methyl-4-amino-5-hydroxymethyl pyrimidine pyrophosphate (HMP-PP) to form thiamine monophosphate (TMP). The protein is Thiamine-phosphate synthase of Lactococcus lactis subsp. cremoris (strain MG1363).